Consider the following 205-residue polypeptide: ATP-dependent Clp protease proteolytic subunit (205 aa).

S98 acts as the Nucleophile in catalysis. The active site involves H123.

This sequence belongs to the peptidase S14 family. In terms of assembly, fourteen ClpP subunits assemble into 2 heptameric rings which stack back to back to give a disk-like structure with a central cavity, resembling the structure of eukaryotic proteasomes.

It is found in the cytoplasm. It catalyses the reaction Hydrolysis of proteins to small peptides in the presence of ATP and magnesium. alpha-casein is the usual test substrate. In the absence of ATP, only oligopeptides shorter than five residues are hydrolyzed (such as succinyl-Leu-Tyr-|-NHMec, and Leu-Tyr-Leu-|-Tyr-Trp, in which cleavage of the -Tyr-|-Leu- and -Tyr-|-Trp bonds also occurs).. In terms of biological role, cleaves peptides in various proteins in a process that requires ATP hydrolysis. Has a chymotrypsin-like activity. Plays a major role in the degradation of misfolded proteins. The sequence is that of ATP-dependent Clp protease proteolytic subunit from Desulforapulum autotrophicum (strain ATCC 43914 / DSM 3382 / VKM B-1955 / HRM2) (Desulfobacterium autotrophicum).